The primary structure comprises 276 residues: Transmembrane protein 53 (276 aa).

Residues 170-190 traverse the membrane as a helical segment; the sequence is LLLLAAFALVVILFHFLLAPF.

Belongs to the TMEM53 family. In terms of tissue distribution, expressed in liver (at protein level).

It is found in the nucleus outer membrane. Its function is as follows. Negatively regulates bone morphogenetic protein (BMP) signaling in osteoblast lineage cells by blocking cytoplasm-nucleus translocation of phosphorylated SMAD1/5/9 proteins. The chain is Transmembrane protein 53 (Tmem53) from Mus musculus (Mouse).